The following is a 385-amino-acid chain: tRNA-specific 2-thiouridylase MnmA (385 aa).

ATP-binding positions include 8-15 and L34; that span reads AMSGGVDS. Catalysis depends on C102, which acts as the Nucleophile. C102 and C200 are disulfide-bonded. Residue G126 participates in ATP binding. An interaction with tRNA region spans residues 150–152; that stretch reads KDQ. The active-site Cysteine persulfide intermediate is the C200. The tract at residues 307 to 308 is interaction with tRNA; the sequence is RY.

The protein belongs to the MnmA/TRMU family.

It localises to the cytoplasm. The enzyme catalyses S-sulfanyl-L-cysteinyl-[protein] + uridine(34) in tRNA + AH2 + ATP = 2-thiouridine(34) in tRNA + L-cysteinyl-[protein] + A + AMP + diphosphate + H(+). Catalyzes the 2-thiolation of uridine at the wobble position (U34) of tRNA, leading to the formation of s(2)U34. The protein is tRNA-specific 2-thiouridylase MnmA of Heliobacterium modesticaldum (strain ATCC 51547 / Ice1).